A 765-amino-acid chain; its full sequence is Leucine-rich repeat and calponin homology domain-containing protein 2 (765 aa).

Disordered regions lie at residues 1–39 (MAASQGGGGNSGGGGCGGGGSSGGCGTAGGGGGGAGGGG) and 55–76 (LFGQPFPNGPPWNPGSLQPQHT). 9 LRR repeats span residues 89 to 110 (SSGILSLSGRKLRDFPGSGYDL), 112 to 133 (DTTQADLSRNRFTEIPSDVWLF), 135 to 156 (PLETLNLYHNCIKTIPEAIKNL), 158 to 179 (MLTYLNISRNLLSTLPKYLFDL), 180 to 201 (PLKVLVVSNNKLVSIPEEIGKL), 203 to 224 (DLMELDISCNEIQVLPQQMGKL), 226 to 248 (SLRELNIRRNNLHVLPDELGDLP), 249 to 269 (LVKLDFSCNKVTEIPVCYRKL), and 271 to 292 (HLQVIILDNNPLQVPPAQICLK). Residues 316 to 401 (LDLPSLSKRM…GSKTDSQKDQ (86 aa)) are disordered. Basic and acidic residues predominate over residues 378–388 (SNREQTSRNDS). Residues 438-472 (SEKSRKNEELGDEKRLEKEQLLAEEEDDDLKEVTD) are a coiled coil. Disordered regions lie at residues 498–552 (RNKP…QSEE) and 565–628 (KYKS…EYGA). Positions 503-512 (QTVECEKSVS) are enriched in basic and acidic residues. Composition is skewed to polar residues over residues 518–529 (SPLSPLTWQPLE) and 584–595 (DNANMSTQSPVS). The region spanning 642–755 (LREEREQIRQ…VTVQALLELP (114 aa)) is the Calponin-homology (CH) domain.

Its function is as follows. May play a role in the organization of the cytoskeleton. This chain is Leucine-rich repeat and calponin homology domain-containing protein 2 (LRCH2), found in Homo sapiens (Human).